Consider the following 688-residue polypeptide: Alpha-1,4-glucan:maltose-1-phosphate maltosyltransferase (688 aa).

Alpha-maltose 1-phosphate is bound by residues lysine 289, glutamine 349, and aspartate 384. The active-site Nucleophile is aspartate 420. Asparagine 421 contributes to the alpha-maltose 1-phosphate binding site. Glutamate 449 (proton donor) is an active-site residue. 560 to 561 (KY) is an alpha-maltose 1-phosphate binding site.

This sequence belongs to the glycosyl hydrolase 13 family. GlgE subfamily. As to quaternary structure, homodimer.

The enzyme catalyses alpha-maltose 1-phosphate + [(1-&gt;4)-alpha-D-glucosyl](n) = [(1-&gt;4)-alpha-D-glucosyl](n+2) + phosphate. In terms of biological role, maltosyltransferase that uses maltose 1-phosphate (M1P) as the sugar donor to elongate linear or branched alpha-(1-&gt;4)-glucans. Is involved in a branched alpha-glucan biosynthetic pathway from trehalose, together with TreS, Mak and GlgB. This is Alpha-1,4-glucan:maltose-1-phosphate maltosyltransferase from Rhodospirillum rubrum (strain ATCC 11170 / ATH 1.1.1 / DSM 467 / LMG 4362 / NCIMB 8255 / S1).